Consider the following 92-residue polypeptide: Large ribosomal subunit protein bL27 (92 aa).

Positions 1-10 (MLLQLQIQLF) are excised as a propeptide.

The protein belongs to the bacterial ribosomal protein bL27 family. In terms of processing, the N-terminus is cleaved by ribosomal processing cysteine protease Prp.

This is Large ribosomal subunit protein bL27 from Aster yellows witches'-broom phytoplasma (strain AYWB).